Here is a 164-residue protein sequence, read N- to C-terminus: UPF0304 protein CKO_00501 (164 aa).

Belongs to the UPF0304 family.

This Citrobacter koseri (strain ATCC BAA-895 / CDC 4225-83 / SGSC4696) protein is UPF0304 protein CKO_00501.